The sequence spans 384 residues: S-adenosylmethionine synthase (384 aa).

Residue H15 participates in ATP binding. D17 is a binding site for Mg(2+). E43 is a K(+) binding site. Residues E56 and Q99 each coordinate L-methionine. Positions 99 to 109 (QSPDINQGVDR) are flexible loop. ATP-binding positions include 164-166 (DAK), 231-232 (RF), D240, 246-247 (RK), A263, and K267. D240 lines the L-methionine pocket. Residue K271 coordinates L-methionine.

The protein belongs to the AdoMet synthase family. In terms of assembly, homotetramer; dimer of dimers. It depends on Mg(2+) as a cofactor. K(+) is required as a cofactor.

The protein localises to the cytoplasm. The enzyme catalyses L-methionine + ATP + H2O = S-adenosyl-L-methionine + phosphate + diphosphate. It participates in amino-acid biosynthesis; S-adenosyl-L-methionine biosynthesis; S-adenosyl-L-methionine from L-methionine: step 1/1. Catalyzes the formation of S-adenosylmethionine (AdoMet) from methionine and ATP. The overall synthetic reaction is composed of two sequential steps, AdoMet formation and the subsequent tripolyphosphate hydrolysis which occurs prior to release of AdoMet from the enzyme. The sequence is that of S-adenosylmethionine synthase from Shewanella piezotolerans (strain WP3 / JCM 13877).